We begin with the raw amino-acid sequence, 330 residues long: Ketol-acid reductoisomerase (NADP(+)) (330 aa).

The region spanning 2 to 182 (VETFYEKDAD…GCTRAGVIKT (181 aa)) is the KARI N-terminal Rossmann domain. Residues 25-28 (YGSQ), K48, S51, S53, and 83-86 (DEVQ) each bind NADP(+). The active site involves H108. G134 lines the NADP(+) pocket. Residues 183-328 (TFKEETETDL…EKLRAMMPWI (146 aa)) enclose the KARI C-terminal knotted domain. D191, E195, E227, and E231 together coordinate Mg(2+). S252 provides a ligand contact to substrate.

This sequence belongs to the ketol-acid reductoisomerase family. Mg(2+) serves as cofactor.

It carries out the reaction (2R)-2,3-dihydroxy-3-methylbutanoate + NADP(+) = (2S)-2-acetolactate + NADPH + H(+). The enzyme catalyses (2R,3R)-2,3-dihydroxy-3-methylpentanoate + NADP(+) = (S)-2-ethyl-2-hydroxy-3-oxobutanoate + NADPH + H(+). Its pathway is amino-acid biosynthesis; L-isoleucine biosynthesis; L-isoleucine from 2-oxobutanoate: step 2/4. It functions in the pathway amino-acid biosynthesis; L-valine biosynthesis; L-valine from pyruvate: step 2/4. Involved in the biosynthesis of branched-chain amino acids (BCAA). Catalyzes an alkyl-migration followed by a ketol-acid reduction of (S)-2-acetolactate (S2AL) to yield (R)-2,3-dihydroxy-isovalerate. In the isomerase reaction, S2AL is rearranged via a Mg-dependent methyl migration to produce 3-hydroxy-3-methyl-2-ketobutyrate (HMKB). In the reductase reaction, this 2-ketoacid undergoes a metal-dependent reduction by NADPH to yield (R)-2,3-dihydroxy-isovalerate. This chain is Ketol-acid reductoisomerase (NADP(+)), found in Petrotoga mobilis (strain DSM 10674 / SJ95).